Reading from the N-terminus, the 292-residue chain is UTP--glucose-1-phosphate uridylyltransferase (292 aa).

Belongs to the UDPGP type 2 family. As to quaternary structure, interacts with FloT.

It localises to the cell membrane. Its subcellular location is the membrane raft. It catalyses the reaction alpha-D-glucose 1-phosphate + UTP + H(+) = UDP-alpha-D-glucose + diphosphate. Its pathway is glycolipid metabolism; diglucosyl-diacylglycerol biosynthesis. In terms of biological role, catalyzes the formation of UDP-glucose from glucose-1-phosphate and UTP. This is an intermediate step in the biosynthesis of diglucosyl-diacylglycerol (Glc2-DAG), i.e. the predominant glycolipid found in B.subtilis membrane, which is also used as a membrane anchor for lipoteichoic acid (LTA). Has a role in the biosynthesis of all phosphate-containing envelope polymers, since UDP-glucose serves as a glucosyl donor not only for the biosynthesis of LTA but also for wall teichoic acids (WTAs). Is required for biofilm formation. This is likely due to another role of UDP-glucose, which might also act as a metabolic signal regulating biofilm formation or may be involved in some unknown biosynthetic pathway essential for biofilm formation, e.g. the synthesis of an exopolysaccharide. The polypeptide is UTP--glucose-1-phosphate uridylyltransferase (gtaB) (Bacillus subtilis (strain 168)).